Reading from the N-terminus, the 340-residue chain is Flap endonuclease 1 (340 aa).

Residues 1 to 98 are N-domain; sequence MGVPIGEIIP…KELEKRREAR (98 aa). Mg(2+) contacts are provided by Asp27, Asp80, Glu152, Glu154, Asp173, Asp175, and Asp236. The tract at residues 116-258 is I-domain; that stretch reads EARKYAQRAT…KALEIVRHSK (143 aa). The segment at 330 to 338 is interaction with PCNA; that stretch reads KQSTLESWF.

It belongs to the XPG/RAD2 endonuclease family. FEN1 subfamily. Interacts with PCNA. PCNA stimulates the nuclease activity without altering cleavage specificity. The cofactor is Mg(2+).

Functionally, structure-specific nuclease with 5'-flap endonuclease and 5'-3' exonuclease activities involved in DNA replication and repair. During DNA replication, cleaves the 5'-overhanging flap structure that is generated by displacement synthesis when DNA polymerase encounters the 5'-end of a downstream Okazaki fragment. Binds the unpaired 3'-DNA end and kinks the DNA to facilitate 5' cleavage specificity. Cleaves one nucleotide into the double-stranded DNA from the junction in flap DNA, leaving a nick for ligation. Also involved in the base excision repair (BER) pathway. Acts as a genome stabilization factor that prevents flaps from equilibrating into structures that lead to duplications and deletions. Also possesses 5'-3' exonuclease activity on nicked or gapped double-stranded DNA. In Pyrococcus furiosus (strain ATCC 43587 / DSM 3638 / JCM 8422 / Vc1), this protein is Flap endonuclease 1.